The sequence spans 217 residues: Cysteine-rich protein 3 (217 aa).

Residues 3-64 (WTCPRCQQPV…KPCYGALFGP (62 aa)) form the LIM zinc-binding 1 domain. Positions 84 to 112 (PGCTTPLSPSSFSPPRPRTGLPQGKKSPP) are disordered. One can recognise an LIM zinc-binding 2 domain in the interval 122 to 183 (SLCPGCGEPV…VPCYGYLFGP (62 aa)).

As to expression, expressed in most tissues, but not in skeletal muscle.

It localises to the cytoplasm. This Homo sapiens (Human) protein is Cysteine-rich protein 3 (CRIP3).